A 457-amino-acid polypeptide reads, in one-letter code: Phosphoglucosamine mutase (457 aa).

Serine 109 acts as the Phosphoserine intermediate in catalysis. Residues serine 109, aspartate 251, aspartate 253, and aspartate 255 each coordinate Mg(2+). Serine 109 is modified (phosphoserine).

This sequence belongs to the phosphohexose mutase family. It depends on Mg(2+) as a cofactor. Activated by phosphorylation.

It catalyses the reaction alpha-D-glucosamine 1-phosphate = D-glucosamine 6-phosphate. Catalyzes the conversion of glucosamine-6-phosphate to glucosamine-1-phosphate. This Bdellovibrio bacteriovorus (strain ATCC 15356 / DSM 50701 / NCIMB 9529 / HD100) protein is Phosphoglucosamine mutase.